The sequence spans 347 residues: Protein RecA (347 aa).

An ATP-binding site is contributed by 67–74; it reads GPESSGKT.

The protein belongs to the RecA family. Post-translationally, the protein migrates as a 40 kDa protein in strains 69A and NCTC 11637. When overexpressed in E.coli a 38 kDa protein is made which is unable to complement the E.coli deletion mutant. It has been suggested this size difference is due to a post-translational modification.

The protein resides in the cytoplasm. Functionally, can catalyze the hydrolysis of ATP in the presence of single-stranded DNA, the ATP-dependent uptake of single-stranded DNA by duplex DNA, and the ATP-dependent hybridization of homologous single-stranded DNAs. It interacts with LexA causing its activation and leading to its autocatalytic cleavage. Deletion of this gene leads to the inability of the bacteria to perform homologous recombination, and markedly increases UV sensitivity. The chain is Protein RecA from Helicobacter pylori (strain ATCC 700392 / 26695) (Campylobacter pylori).